The primary structure comprises 46 residues: Lariatin (46 aa).

A propeptide spanning residues methionine 1–alanine 26 is cleaved from the precursor. A cross-link (isoglutamyl glycine isopeptide (Gly-Glu)) is located at residues glycine 27–glutamate 34.

The linear precursor LarA is probably cleaved by the putative peptidase LarD, generating linear 18-residue Lariatin-A or 20-residue Lariatin-B. These linear peptides are probably cross-linked by LarB. Finally, lariatins A and B may be exported by ABC transporter LarE.

In terms of biological role, peptide antibiotic with selective activity against Mycobacterium species (M.smegmatis, MIC=3.13 ug/ml and M.tuberculosis, MIC=0.39 ug/ml). it is plausible that the target of lariatins lies within the cell wall in mycobacteria. Its function is as follows. Peptide antibiotic with selective activity against Mycobacterium species (M.smegmatis, MIC=6.25 ug/ml). This is Lariatin from Rhodococcus jostii.